The primary structure comprises 55 residues: Large ribosomal subunit protein bL33 (55 aa).

The span at 1 to 10 shows a compositional bias: basic and acidic residues; it reads MAKGGREKIK. Residues 1-27 form a disordered region; that stretch reads MAKGGREKIKLQSTAGTGHFYTTDKNK.

This sequence belongs to the bacterial ribosomal protein bL33 family.

This chain is Large ribosomal subunit protein bL33, found in Polaromonas naphthalenivorans (strain CJ2).